The chain runs to 304 residues: Glutaminase (304 aa).

Residues S63, N113, E157, N164, Y188, Y240, and V258 each coordinate substrate.

The protein belongs to the glutaminase family. In terms of assembly, homotetramer.

The enzyme catalyses L-glutamine + H2O = L-glutamate + NH4(+). In Chromobacterium violaceum (strain ATCC 12472 / DSM 30191 / JCM 1249 / CCUG 213 / NBRC 12614 / NCIMB 9131 / NCTC 9757 / MK), this protein is Glutaminase.